The following is a 211-amino-acid chain: Protein-L-isoaspartate O-methyltransferase (211 aa).

Ser-62 is an active-site residue.

Belongs to the methyltransferase superfamily. L-isoaspartyl/D-aspartyl protein methyltransferase family.

The protein resides in the cytoplasm. It carries out the reaction [protein]-L-isoaspartate + S-adenosyl-L-methionine = [protein]-L-isoaspartate alpha-methyl ester + S-adenosyl-L-homocysteine. Catalyzes the methyl esterification of L-isoaspartyl residues in peptides and proteins that result from spontaneous decomposition of normal L-aspartyl and L-asparaginyl residues. It plays a role in the repair and/or degradation of damaged proteins. In Shewanella loihica (strain ATCC BAA-1088 / PV-4), this protein is Protein-L-isoaspartate O-methyltransferase.